Here is a 256-residue protein sequence, read N- to C-terminus: MAPFTKSVTEVQVESVIFPPEVKPPGSSKTLFLGGAGVRGIEIQGKFIKFTAIGVYLEDNAVPSLAVKWKGKSAQELTESVEFFRDIVTGPMEKFTRVTTILPLTGQQYSEKVSENCVAAWKSLGIYSDAEAKAIEKFIEIFKDQTFPPAASNLFTQSPLGSLTMSFSKDGSIPEVGNAVLENKLLSEAVLESIIGKHGVSPEAKQNLATRLVQLLNENSTTDLNESENEKLNSNEVSKEEKPLQVEKSAFKEVEV.

3 residues coordinate substrate: threonine 51, asparagine 116, and serine 193. The segment at 219 to 256 (NSTTDLNESENEKLNSNEVSKEEKPLQVEKSAFKEVEV) is disordered. Over residues 228–256 (ENEKLNSNEVSKEEKPLQVEKSAFKEVEV) the composition is skewed to basic and acidic residues.

The protein belongs to the chalcone isomerase family. In terms of tissue distribution, nodules.

It catalyses the reaction a chalcone = a flavanone.. The protein operates within secondary metabolite biosynthesis; flavonoid biosynthesis. Functionally, catalyzes the intramolecular cyclization of bicyclic chalcones into tricyclic (S)-flavanones. Responsible for the isomerization of 4,2',4',6'-tetrahydroxychalcone (also termed chalcone) into naringenin. The chain is Chalcone--flavanone isomerase (CHI) from Elaeagnus umbellata (Autumn olive).